Here is a 498-residue protein sequence, read N- to C-terminus: MAISDEPETVATALNHSSLRRRPTAAGLFNSPETTTDSSGDDLAKDSGSDDSISSDAANSQPQQKQDTDFSVLKFAYRPSVPAHRKVKESPLSSDTIFRQSHAGLFNLCIVVLVAVNSRLIIENLMKYGWLIKSGFWFSSKSLRDWPLFMCCLSLVVFPFAAFIVEKLAQQKCIPEPVVVVLHIIITSASLFYPVLVILRCDSAFLSGVTLMLFACVVWLKLVSYAHTNYDMRALTKSVEKGEALPDTLNMDYPYNVSFKSLAYFLVAPTLCYQPSYPRTPYIRKGWLFRQLVKLIIFTGVMGFIIEQYINPIVQNSQHPLKGNLLYAIERVLKLSVPNLYVWLCMFYCFFHLWLNILAELLRFGDREFYQDWWNAKTVEDYWRMWNMPVHKWMIRHLYFPCLRHGIPKAVALLIAFLVSALFHELCIAVPCHIFKLWAFGGIMFQVPLVFITNYLQNKFRNSMVGNMIFWFIFSILGQPMCVLLYYHDLMNRKGKLD.

Positions 1-67 are disordered; it reads MAISDEPETV…ANSQPQQKQD (67 aa). A run of 7 helical transmembrane segments spans residues 102 to 122, 146 to 166, 178 to 198, 203 to 223, 253 to 273, 295 to 315, and 342 to 362; these read HAGL…RLII, WPLF…FIVE, VVVV…VLVI, SAFL…LKLV, YPYN…TLCY, LIIF…PIVQ, and VWLC…AELL. Positions 369 to 375 match the FYXDWWN motif motif; that stretch reads FYQDWWN. 3 helical membrane passes run 410 to 430, 432 to 452, and 465 to 485; these read AVAL…CIAV, CHIF…LVFI, and VGNM…CVLL. His-424 is an active-site residue.

It belongs to the membrane-bound acyltransferase family. Sterol o-acyltransferase subfamily. In terms of tissue distribution, highly expressed in flowers and pods. Expressed at low levels in roots, stems and leaves.

The protein resides in the endoplasmic reticulum membrane. It carries out the reaction an acyl-CoA + a 1,2-diacyl-sn-glycerol = a triacyl-sn-glycerol + CoA. The protein operates within glycerolipid metabolism; triacylglycerol biosynthesis. Major contributor to triacylglycerol (TAG) synthesis and oil accumulation in developing seeds. Catalyzes the acylation of the sn-3 hydroxy group of sn-1,2-diacylglycerol using acyl-CoA. Has a marked preference for oleoyl-CoA (18:1) and sn-1,2-dioleoylglycerol over vernoloyl-CoA and sn-1,2-divernoloylglycerol. Can use oleoyl-CoA, linoleoyl-CoA and linolenoyl-CoA as substrates. The chain is Diacylglycerol O-acyltransferase 1A from Glycine max (Soybean).